Reading from the N-terminus, the 128-residue chain is Fluoride-specific ion channel FluC (128 aa).

The next 4 helical transmembrane spans lie at 2–22 (FYSI…RWCL), 35–55 (LGTL…AVVF), 67–87 (LFVI…SVEV), and 96–116 (FGWA…LTAL). Na(+) is bound by residues Gly-75 and Thr-78.

It belongs to the fluoride channel Fluc/FEX (TC 1.A.43) family.

Its subcellular location is the cell inner membrane. It catalyses the reaction fluoride(in) = fluoride(out). With respect to regulation, na(+) is not transported, but it plays an essential structural role and its presence is essential for fluoride channel function. In terms of biological role, fluoride-specific ion channel. Important for reducing fluoride concentration in the cell, thus reducing its toxicity. In Burkholderia cenocepacia (strain ATCC BAA-245 / DSM 16553 / LMG 16656 / NCTC 13227 / J2315 / CF5610) (Burkholderia cepacia (strain J2315)), this protein is Fluoride-specific ion channel FluC.